The chain runs to 436 residues: D-aminoacyl-tRNA deacylase (436 aa).

Belongs to the DtdA deacylase family. In terms of assembly, monomer. Zn(2+) is required as a cofactor.

It carries out the reaction a D-aminoacyl-tRNA + H2O = a tRNA + a D-alpha-amino acid + H(+). It catalyses the reaction glycyl-tRNA(Ala) + H2O = tRNA(Ala) + glycine + H(+). Functionally, D-aminoacyl-tRNA deacylase with broad substrate specificity. By recycling D-aminoacyl-tRNA to D-amino acids and free tRNA molecules, this enzyme counteracts the toxicity associated with the formation of D-aminoacyl-tRNA entities in vivo. The polypeptide is D-aminoacyl-tRNA deacylase (Methanoregula boonei (strain DSM 21154 / JCM 14090 / 6A8)).